A 954-amino-acid chain; its full sequence is MMAAAVEEEEMVERMHGWARDMDVASRRAEEEAMRRYDAASWLRSTVGVVCARDLPDEPSEEEFRLGLRNGIVLCNALNKIQPGAIPKVVQAQSDAAGPTDGSALCAYQYFENLRNFLVVVEDLRLPTFEVSDLEKGGKGVRVVDCVLALKSFSESNKTGRQASCKYGGLSKPLTARKYFILKNTDAFMNKIMKGHSAEAIQSEFSEGQSIVTDFSIESNEMTTSDSLSILLRKVLLDKKPEEVPLIVESILSKVIQEYEHRIAIQNKMDEEEQNLLNITEQVNHVVVNGDGEVKQFQLEAQTNFDVQQKQIQELKGALSFVKSGMEQLRLQYSEEFAKLGKHFYTLSNAASSYHKVLEENRKLYNQIQDLKGNIRVYCRVRPFLPGHRSLSSSVADTEERTITIITPTKYGKDGCKSFSFNRVFGPASTQEEVFSDMQPLIRSVLDGFNVCIFAYGQTGSGKTFTMSGPKVLTEESLGVNYRALNDLFNIKAQRKGTIDYEISVQMIEIYNEQVRDLLQDGGNRRLEIRNTPQKGLAVPDASIVPVTSTADVVELMNQGQKNRAVGSTAINDRSSRSHSCLSVHVQGKYLTSGAMLRGCMHLVDLAGSERVDKSEVVGDRLKEAQYINKSLSALGDVIASLAQKNSHVPYRNSKLTQLLQDSLGGQAKTLMFVHVSPELDAVGETISTLKFAERVASVELGAAKANKEGSEVRELKEQIATLKAALAKKEGEPENIQSTQSSPDMYRIKRGNAIPAFPKNRQPMEEVGNLEVRNNATPMQKKASFQFSGVLSENNSSDLAENCNGIQKTDRMAVGNNQFENGNSILELEPGATQLPTFFYQRYDPDKQRRRAEPVETDDSDSFDAATSSPSDQEMLLSTSGLKADGIASRGAFIIKKPQTKNTKITATKIPNLAMKSPMSEKRLQTPIRNSKQLPFSTTGGRRTRNGKINTPK.

Positions 33-155 (AMRRYDAASW…CVLALKSFSE (123 aa)) constitute a Calponin-homology (CH) domain. The 326-residue stretch at 374-699 (NIRVYCRVRP…LKFAERVASV (326 aa)) folds into the Kinesin motor domain. 457–464 (GQTGSGKT) contacts ATP. A coiled-coil region spans residues 704–733 (AKANKEGSEVRELKEQIATLKAALAKKEGE). Basic and acidic residues predominate over residues 844-855 (YDPDKQRRRAEP). 2 disordered regions span residues 844-876 (YDPD…DQEM) and 912-954 (PNLA…NTPK). Over residues 864 to 873 (FDAATSSPSD) the composition is skewed to low complexity. Polar residues predominate over residues 928–954 (PIRNSKQLPFSTTGGRRTRNGKINTPK).

The protein belongs to the TRAFAC class myosin-kinesin ATPase superfamily. Kinesin family. KIN-14 subfamily. As to quaternary structure, forms oligomers in vitro. Interacts with actin microfilaments. Binds to actin in vitro through its calponin-homology (CH) domain. As to expression, expressed in primary leaf, primary root, developing flower and coleoptile.

It is found in the cytoplasm. It localises to the cytoskeleton. The microtubule-dependent ATPase activity is regulated by actin binding. Its function is as follows. Minus end-directed motor protein that transports actin filaments along microtubules. Plays a central role in the polar orientation of actin filaments along microtubules, and thus a contribution to the organization of the cytoskeletal architecture. Links the actin microfilaments with the cortical microtubules in both cycling and non-cycling cells. Required for efficient cell elongation by its participation in the premitotic nuclear positioning. The sequence is that of Kinesin-like protein KIN-14Q from Oryza sativa subsp. japonica (Rice).